We begin with the raw amino-acid sequence, 354 residues long: S-adenosylmethionine:tRNA ribosyltransferase-isomerase (354 aa).

This sequence belongs to the QueA family. As to quaternary structure, monomer.

It localises to the cytoplasm. It carries out the reaction 7-aminomethyl-7-carbaguanosine(34) in tRNA + S-adenosyl-L-methionine = epoxyqueuosine(34) in tRNA + adenine + L-methionine + 2 H(+). It functions in the pathway tRNA modification; tRNA-queuosine biosynthesis. Functionally, transfers and isomerizes the ribose moiety from AdoMet to the 7-aminomethyl group of 7-deazaguanine (preQ1-tRNA) to give epoxyqueuosine (oQ-tRNA). This Salmonella newport (strain SL254) protein is S-adenosylmethionine:tRNA ribosyltransferase-isomerase.